The primary structure comprises 176 residues: Translation initiation factor IF-3 (176 aa).

The protein belongs to the IF-3 family. Monomer.

The protein resides in the cytoplasm. In terms of biological role, IF-3 binds to the 30S ribosomal subunit and shifts the equilibrium between 70S ribosomes and their 50S and 30S subunits in favor of the free subunits, thus enhancing the availability of 30S subunits on which protein synthesis initiation begins. The polypeptide is Translation initiation factor IF-3 (Wolinella succinogenes (strain ATCC 29543 / DSM 1740 / CCUG 13145 / JCM 31913 / LMG 7466 / NCTC 11488 / FDC 602W) (Vibrio succinogenes)).